Here is a 164-residue protein sequence, read N- to C-terminus: UPF0114 protein YqhA (164 aa).

3 helical membrane-spanning segments follow: residues 15–35 (LLAP…LKFF), 53–73 (LILV…LVMV), and 136–156 (LMWY…MGYL).

Belongs to the UPF0114 family.

It localises to the cell membrane. The chain is UPF0114 protein YqhA from Salmonella dublin (strain CT_02021853).